The primary structure comprises 859 residues: Valine--tRNA ligase (859 aa).

Positions 46–56 match the 'HIGH' region motif; it reads PTVSGQLHIGH. The short motif at 583–587 is the 'KMSKS' region element; sequence KMSKS. Lys586 lines the ATP pocket.

Belongs to the class-I aminoacyl-tRNA synthetase family. ValS type 2 subfamily. In terms of assembly, monomer.

The protein localises to the cytoplasm. It catalyses the reaction tRNA(Val) + L-valine + ATP = L-valyl-tRNA(Val) + AMP + diphosphate. In terms of biological role, catalyzes the attachment of valine to tRNA(Val). As ValRS can inadvertently accommodate and process structurally similar amino acids such as threonine, to avoid such errors, it has a 'posttransfer' editing activity that hydrolyzes mischarged Thr-tRNA(Val) in a tRNA-dependent manner. In Rickettsia felis (strain ATCC VR-1525 / URRWXCal2) (Rickettsia azadi), this protein is Valine--tRNA ligase.